We begin with the raw amino-acid sequence, 309 residues long: Probable RuBisCO transcriptional regulator (309 aa).

The HTH lysR-type domain occupies 6–63 (FTLDQLRILKAIVKEGSFKRAADSLYVSQPAISLQIQNLEKQLNIPLFERSNKKATLT). The H-T-H motif DNA-binding region spans 23–42 (FKRAADSLYVSQPAISLQIQ).

It belongs to the LysR transcriptional regulatory family.

The protein resides in the plastid. It is found in the chloroplast. Trans-acting transcriptional regulator of RuBisCO genes (rbcL and rbcS) expression. The polypeptide is Probable RuBisCO transcriptional regulator (rbcR) (Gracilaria tenuistipitata var. liui (Red alga)).